Here is a 264-residue protein sequence, read N- to C-terminus: 3-methyl-2-oxobutanoate hydroxymethyltransferase (264 aa).

The Mg(2+) site is built by aspartate 45 and aspartate 84. 3-methyl-2-oxobutanoate-binding positions include 45–46 (DS), aspartate 84, and lysine 113. Glutamate 115 lines the Mg(2+) pocket. Glutamate 182 functions as the Proton acceptor in the catalytic mechanism.

The protein belongs to the PanB family. Homodecamer; pentamer of dimers. Mg(2+) is required as a cofactor.

It is found in the cytoplasm. The enzyme catalyses 3-methyl-2-oxobutanoate + (6R)-5,10-methylene-5,6,7,8-tetrahydrofolate + H2O = 2-dehydropantoate + (6S)-5,6,7,8-tetrahydrofolate. It functions in the pathway cofactor biosynthesis; (R)-pantothenate biosynthesis; (R)-pantoate from 3-methyl-2-oxobutanoate: step 1/2. Catalyzes the reversible reaction in which hydroxymethyl group from 5,10-methylenetetrahydrofolate is transferred onto alpha-ketoisovalerate to form ketopantoate. This is 3-methyl-2-oxobutanoate hydroxymethyltransferase from Nitrosococcus oceani (strain ATCC 19707 / BCRC 17464 / JCM 30415 / NCIMB 11848 / C-107).